A 350-amino-acid chain; its full sequence is Hydroxymethylglutaryl-CoA synthase (350 aa).

Glutamate 83 (proton donor/acceptor) is an active-site residue. Cysteine 115 functions as the Acyl-thioester intermediate in the catalytic mechanism. 2 residues coordinate (3S)-3-hydroxy-3-methylglutaryl-CoA: cysteine 115 and threonine 156. Residue arginine 204 coordinates CoA. The (3S)-3-hydroxy-3-methylglutaryl-CoA site is built by threonine 206 and histidine 239. The active-site Proton donor/acceptor is the histidine 239. Residue lysine 244 coordinates CoA. (3S)-3-hydroxy-3-methylglutaryl-CoA-binding residues include asparagine 271 and serine 301.

The protein belongs to the thiolase-like superfamily. Archaeal HMG-CoA synthase family. Interacts with acetoacetyl-CoA thiolase that catalyzes the precedent step in the pathway and with a DUF35 protein. The acetoacetyl-CoA thiolase/HMG-CoA synthase complex channels the intermediate via a fused CoA-binding site, which allows for efficient coupling of the endergonic thiolase reaction with the exergonic HMGCS reaction.

It catalyses the reaction acetoacetyl-CoA + acetyl-CoA + H2O = (3S)-3-hydroxy-3-methylglutaryl-CoA + CoA + H(+). The protein operates within metabolic intermediate biosynthesis; (R)-mevalonate biosynthesis; (R)-mevalonate from acetyl-CoA: step 2/3. Its function is as follows. Catalyzes the condensation of acetyl-CoA with acetoacetyl-CoA to form 3-hydroxy-3-methylglutaryl-CoA (HMG-CoA). Functions in the mevalonate (MVA) pathway leading to isopentenyl diphosphate (IPP), a key precursor for the biosynthesis of isoprenoid compounds that are building blocks of archaeal membrane lipids. The chain is Hydroxymethylglutaryl-CoA synthase from Thermococcus sibiricus (strain DSM 12597 / MM 739).